Here is a 242-residue protein sequence, read N- to C-terminus: DNA repair protein RecO (242 aa).

This sequence belongs to the RecO family. As to quaternary structure, monomer.

Involved in DNA repair and RecF pathway recombination. This chain is DNA repair protein RecO, found in Salmonella schwarzengrund (strain CVM19633).